Here is a 690-residue protein sequence, read N- to C-terminus: Guanylate cyclase soluble subunit alpha-1 (690 aa).

Ser267 bears the Phosphoserine mark. One can recognise a Guanylate cyclase domain in the interval 481-608; it reads TMLFSDIVGF…NNVTLANKFE (128 aa).

Belongs to the adenylyl cyclase class-4/guanylyl cyclase family. As to quaternary structure, the active enzyme is formed by a heterodimer of an alpha and a beta subunit. Heterodimer with GUCY1B1. The cofactor is Mg(2+). It depends on Mn(2+) as a cofactor.

The protein localises to the cytoplasm. The catalysed reaction is GTP = 3',5'-cyclic GMP + diphosphate. With respect to regulation, activated by nitric oxide in the presence of magnesium or manganese ions. The protein is Guanylate cyclase soluble subunit alpha-1 (GUCY1A1) of Canis lupus familiaris (Dog).